The sequence spans 318 residues: Aspartate carbamoyltransferase catalytic subunit (318 aa).

Carbamoyl phosphate is bound by residues arginine 58 and threonine 59. Position 86 (lysine 86) interacts with L-aspartate. Positions 108, 141, and 144 each coordinate carbamoyl phosphate. Arginine 174 and arginine 226 together coordinate L-aspartate. Residues glycine 270 and proline 271 each contribute to the carbamoyl phosphate site.

It belongs to the aspartate/ornithine carbamoyltransferase superfamily. ATCase family. As to quaternary structure, heterododecamer (2C3:3R2) of six catalytic PyrB chains organized as two trimers (C3), and six regulatory PyrI chains organized as three dimers (R2).

It catalyses the reaction carbamoyl phosphate + L-aspartate = N-carbamoyl-L-aspartate + phosphate + H(+). It functions in the pathway pyrimidine metabolism; UMP biosynthesis via de novo pathway; (S)-dihydroorotate from bicarbonate: step 2/3. Functionally, catalyzes the condensation of carbamoyl phosphate and aspartate to form carbamoyl aspartate and inorganic phosphate, the committed step in the de novo pyrimidine nucleotide biosynthesis pathway. The chain is Aspartate carbamoyltransferase catalytic subunit from Lactobacillus delbrueckii subsp. bulgaricus (strain ATCC 11842 / DSM 20081 / BCRC 10696 / JCM 1002 / NBRC 13953 / NCIMB 11778 / NCTC 12712 / WDCM 00102 / Lb 14).